A 700-amino-acid polypeptide reads, in one-letter code: DNA ligase (700 aa).

Residues 61-65 (DAEYD), 110-111 (SL), and Glu-141 contribute to the NAD(+) site. The active-site N6-AMP-lysine intermediate is the Lys-143. Arg-164, Glu-202, Lys-321, and Lys-345 together coordinate NAD(+). The Zn(2+) site is built by Cys-439, Cys-442, Cys-457, and Cys-462. One can recognise a BRCT domain in the interval 619-700 (AVSNKLAGLQ…EFLRLLEDSK (82 aa)).

The protein belongs to the NAD-dependent DNA ligase family. LigA subfamily. Mg(2+) is required as a cofactor. It depends on Mn(2+) as a cofactor.

It catalyses the reaction NAD(+) + (deoxyribonucleotide)n-3'-hydroxyl + 5'-phospho-(deoxyribonucleotide)m = (deoxyribonucleotide)n+m + AMP + beta-nicotinamide D-nucleotide.. In terms of biological role, DNA ligase that catalyzes the formation of phosphodiester linkages between 5'-phosphoryl and 3'-hydroxyl groups in double-stranded DNA using NAD as a coenzyme and as the energy source for the reaction. It is essential for DNA replication and repair of damaged DNA. This is DNA ligase from Hydrogenobaculum sp. (strain Y04AAS1).